A 163-amino-acid polypeptide reads, in one-letter code: Nucleotide-binding protein LA_3406 (163 aa).

The protein belongs to the YajQ family.

Functionally, nucleotide-binding protein. The protein is Nucleotide-binding protein LA_3406 of Leptospira interrogans serogroup Icterohaemorrhagiae serovar Lai (strain 56601).